Reading from the N-terminus, the 115-residue chain is NADH-ubiquinone oxidoreductase chain 3 (115 aa).

A run of 3 helical transmembrane segments spans residues 4–24 (MLAMLINITLSLCLISLAFWL), 55–75 (FFLVGITFLLLDLEIALLLPL), and 84–104 (MITTTIVSLSLVSILALGLSY).

Belongs to the complex I subunit 3 family. In terms of assembly, core subunit of respiratory chain NADH dehydrogenase (Complex I) which is composed of 45 different subunits. Interacts with TMEM186. Interacts with TMEM242.

The protein resides in the mitochondrion inner membrane. The catalysed reaction is a ubiquinone + NADH + 5 H(+)(in) = a ubiquinol + NAD(+) + 4 H(+)(out). Functionally, core subunit of the mitochondrial membrane respiratory chain NADH dehydrogenase (Complex I) which catalyzes electron transfer from NADH through the respiratory chain, using ubiquinone as an electron acceptor. Essential for the catalytic activity of complex I. The sequence is that of NADH-ubiquinone oxidoreductase chain 3 from Reithrodon auritus (Bunny rat).